The primary structure comprises 835 residues: Toll-like receptor 4 (835 aa).

A signal peptide spans 1-25 (MMPLLHLAGTLIMALFLSCLRPGSL). Residues 26-638 (NPCIEVLPNI…KTIISVSVVS (613 aa)) lie on the Extracellular side of the membrane. Cysteine 28 and cysteine 39 are oxidised to a cystine. 3 N-linked (GlcNAc...) asparagine glycosylation sites follow: asparagine 34, asparagine 43, and asparagine 75. LRR repeat units lie at residues 54-75 (STKN…SFTN), 78-99 (QLQW…AWHG), 102-123 (QLST…SFSG), 126-147 (NLEN…HIGQ), and 150-171 (SLKK…EYFS). Asparagine 172 carries an N-linked (GlcNAc...) asparagine glycan. LRR repeat units follow at residues 175-198 (NLEH…QFLR), 204-224 (NLSL…AFQG), and 226-247 (RLHE…MCLQ). 5 N-linked (GlcNAc...) asparagine glycosylation sites follow: asparagine 204, asparagine 237, asparagine 248, asparagine 281, and asparagine 307. Cysteines 280 and 304 form a disulfide. An LRR 9 repeat occupies 372–381 (SLRYLDLSRN). The cysteines at positions 388 and 389 are disulfide-linked. 4 LRR repeats span residues 398 to 420 (NLKY…MGLE), 421 to 442 (ELEY…SVFL), 446 to 467 (KLLY…IFLG), and 470 to 491 (SLNT…NVFT). Residues asparagine 492, asparagine 495, and asparagine 524 are each glycosylated (N-linked (GlcNAc...) asparagine). 3 LRR repeats span residues 495–516 (NLTF…VFDT), 519–540 (RLQL…HYKQ), and 543–564 (SLRT…LQHF). N-linked (GlcNAc...) asparagine glycosylation is found at asparagine 572 and asparagine 575. An LRRCT domain is found at 576 to 627 (NSVACICEYQNFLQWVKDQKMFLVNVEQMKCASPIDMKASLVLDFTNSTCYI). Cystine bridges form between cysteine 580-cysteine 606 and cysteine 582-cysteine 625. Asparagine 622 is a glycosylation site (N-linked (GlcNAc...) asparagine). Residues 639–659 (VLVVATVAFLIYHFYFHLILI) traverse the membrane as a helical segment. At 660–835 (AGCKKYSRGE…EEEQEATTLT (176 aa)) the chain is on the cytoplasmic side. A TIR domain is found at 670 to 813 (SIYDAFVIYS…IFWRRLKKAL (144 aa)).

This sequence belongs to the Toll-like receptor family. As to quaternary structure, belongs to the lipopolysaccharide (LPS) receptor, a multi-protein complex containing at least CD14, LY96 and TLR4. Binding to bacterial LPS leads to homodimerization. Interacts with LY96 via the extracellular domain. Interacts with MYD88 and TIRAP via their respective TIR domains. Interacts with TICAM2. Interacts with NOX4. Interacts with CNPY3 and HSP90B1; this interaction is required for proper folding in the endoplasmic reticulum. Interacts with MAP3K21; this interaction leads to negative regulation of TLR4 signaling. Interacts with CD36, following CD36 stimulation by oxLDL or amyloid-beta 42, and forms a heterodimer with TLR6. The trimeric complex is internalized and triggers inflammatory response. LYN kinase activity facilitates TLR4-TLR6 heterodimerization and signal initiation. Interacts with TICAM1 in response to LPS in a WDFY1-dependent manner. Interacts with WDFY1 in response to LPS. Interacts with SMPDL3B. Interacts with CEACAM1; upon lipopolysaccharide stimulation, forms a complex including TLR4 and the phosphorylated form of SYK and CEACAM1, which in turn, recruits PTPN6 that dephosphorylates SYK, reducing the production of reactive oxygen species (ROS) and lysosome disruption, which in turn, reduces the activity of the inflammasome. Interacts with RFTN1; the interaction occurs in response to lipopolysaccharide stimulation. Interacts with SCIMP; the interaction occurs in response to lipopolysaccharide stimulation and is enhanced by phosphorylation of SCIMP by LYN. This interaction facilitates the phosphorylation of TLR4 by LYN which elicits a selective cytokine response in macrophages. Interacts with TRAF3IP3. Interacts with TREM1; this interaction enhances TLR4-mediated inflammatory response. Interacts with ZG16B/PAUF. Interacts with CD82; this interaction inhibits TLR4-mediated signaling pathway. Phosphorylated on tyrosine residues by LYN after binding lipopolysaccharide. In terms of processing, ubiquitinated by RNF128 via 'Lys-28'-linked polyubiquitin chains, leading to proteasomal degradation.

The protein localises to the cell membrane. It is found in the early endosome. The protein resides in the cell projection. Its subcellular location is the ruffle. Functionally, transmembrane receptor that functions as a pattern recognition receptor recognizing pathogen- and damage-associated molecular patterns (PAMPs and DAMPs) to induce innate immune responses via downstream signaling pathways. At the plasma membrane, cooperates with LY96 to mediate the innate immune response to bacterial lipopolysaccharide (LPS). Also involved in LPS-independent inflammatory responses triggered by free fatty acids, such as palmitate, and Ni(2+). Mechanistically, acts via MYD88, TIRAP and TRAF6, leading to NF-kappa-B activation, cytokine secretion and the inflammatory response. Alternatively, CD14-mediated TLR4 internalization via endocytosis is associated with the initiation of a MYD88-independent signaling via the TICAM1-TBK1-IRF3 axis leading to type I interferon production. In addition to the secretion of proinflammatory cytokines, initiates the activation of NLRP3 inflammasome and formation of a positive feedback loop between autophagy and NF-kappa-B signaling cascade. In complex with TLR6, promotes inflammation in monocytes/macrophages by associating with TLR6 and the receptor CD86. Upon ligand binding, such as oxLDL or amyloid-beta 42, the TLR4:TLR6 complex is internalized and triggers inflammatory response, leading to NF-kappa-B-dependent production of CXCL1, CXCL2 and CCL9 cytokines, via MYD88 signaling pathway, and CCL5 cytokine, via TICAM1 signaling pathway. In myeloid dendritic cells, vesicular stomatitis virus glycoprotein G but not LPS promotes the activation of IRF7, leading to type I IFN production in a CD14-dependent manner. The chain is Toll-like receptor 4 (Tlr4) from Rattus norvegicus (Rat).